Here is a 461-residue protein sequence, read N- to C-terminus: Cyclic AMP-responsive element-binding protein 3-like protein 3 (461 aa).

Residues 1 to 322 lie on the Cytoplasmic side of the membrane; sequence MNTDLAAGKM…STSKSAQTGT (322 aa). The segment at 51–120 is disordered; that stretch reads DQQVLPNPDS…AGCHPAQPGK (70 aa). Residues 63 to 85 are compositionally biased toward low complexity; it reads FLSSILGSGDSLPSSPLWSPEGS. Serine 173 carries the post-translational modification Phosphoserine. A bZIP domain is found at 243 to 306; the sequence is VLKKIRRKIR…LSLLEQLKKL (64 aa). The tract at residues 245-274 is basic motif; sequence KKIRRKIRNKQSAQESRKKKKEYIDGLETR. Residues 285–306 form a leucine-zipper region; it reads LQRKVLHLEKQNLSLLEQLKKL. Lysine 294 participates in a covalent cross-link: Glycyl lysine isopeptide (Lys-Gly) (interchain with G-Cter in ubiquitin). Residues 323 to 343 form a helical; Signal-anchor for type II membrane protein membrane-spanning segment; that stretch reads CVAVLLLSFALIILPSISPFG. At 344 to 461 the chain is on the lumenal side; it reads PNKTESPGDF…AGLEAAGDEL (118 aa). The disordered stretch occupies residues 370–408; the sequence is RVAADAVPGSEAPGPRPEADTTREESPGSPGADWGFQDT. O-linked (GalNAc...) serine glycosylation occurs at serine 379. Residues 386–395 are compositionally biased toward basic and acidic residues; the sequence is PEADTTREES. N-linked (GlcNAc...) asparagine glycans are attached at residues asparagine 410, asparagine 413, asparagine 420, and asparagine 427. The tract at residues 442-461 is disordered; sequence APGPSTGSGRAGLEAAGDEL.

The protein belongs to the bZIP family. ATF subfamily. Binds DNA as a dimer. May form homodimers. Interacts with ATF6. Interacts with SYNV1/HRD1; this interaction leads to CREB3L3 ubiquitination and proteasomal degradation. In terms of processing, controlled by regulated intramembrane proteolysis (RIP). Following ER stress a fragment containing the cytoplasmic transcription factor domain is released by proteolysis. The cleavage seems to be performed sequentially by site-1 and site-2 proteases (PS1 and PS2). Post-translationally, N- and O-glycosylated. N-glycosylation is required for optimal proteolytic activation. O-glycosylated with core 1 or possibly core 8 glycans. Ubiquitinated at Lys-294 by SYNV1/HRD1 via 'Lys-27'-linked ubiquitin. Exclusively expressed in liver. Underexpressed in hepatocellular carcinoma tissues.

It is found in the endoplasmic reticulum membrane. Its subcellular location is the nucleus. Functionally, transcription factor that may act during endoplasmic reticulum stress by activating unfolded protein response target genes. Activated in response to cAMP stimulation. In vitro, binds to the cAMP response element (CRE) and box-B element. Activates transcription through box-B element. Activates transcription through CRE. May function synergistically with ATF6. In acute inflammatory response, may activate expression of acute phase response (APR) genes. May be involved in growth suppression. Regulates FGF21 transcription. Plays a crucial role in the regulation of triglyceride metabolism and is required for the maintenance of normal plasma triglyceride concentrations. This Homo sapiens (Human) protein is Cyclic AMP-responsive element-binding protein 3-like protein 3 (CREB3L3).